Here is a 240-residue protein sequence, read N- to C-terminus: Phosphatidylserine decarboxylase proenzyme (240 aa).

Catalysis depends on Ser205, which acts as the Schiff-base intermediate with substrate; via pyruvic acid. Pyruvic acid (Ser); by autocatalysis is present on Ser205.

The protein belongs to the phosphatidylserine decarboxylase family. PSD-A subfamily. Heterodimer of a large membrane-associated beta subunit and a small pyruvoyl-containing alpha subunit. Pyruvate serves as cofactor. Is synthesized initially as an inactive proenzyme. Formation of the active enzyme involves a self-maturation process in which the active site pyruvoyl group is generated from an internal serine residue via an autocatalytic post-translational modification. Two non-identical subunits are generated from the proenzyme in this reaction, and the pyruvate is formed at the N-terminus of the alpha chain, which is derived from the carboxyl end of the proenzyme. The post-translation cleavage follows an unusual pathway, termed non-hydrolytic serinolysis, in which the side chain hydroxyl group of the serine supplies its oxygen atom to form the C-terminus of the beta chain, while the remainder of the serine residue undergoes an oxidative deamination to produce ammonia and the pyruvoyl prosthetic group on the alpha chain.

The protein resides in the cell membrane. It catalyses the reaction a 1,2-diacyl-sn-glycero-3-phospho-L-serine + H(+) = a 1,2-diacyl-sn-glycero-3-phosphoethanolamine + CO2. It participates in phospholipid metabolism; phosphatidylethanolamine biosynthesis; phosphatidylethanolamine from CDP-diacylglycerol: step 2/2. Functionally, catalyzes the formation of phosphatidylethanolamine (PtdEtn) from phosphatidylserine (PtdSer). The chain is Phosphatidylserine decarboxylase proenzyme from Rhodopirellula baltica (strain DSM 10527 / NCIMB 13988 / SH1).